Here is a 901-residue protein sequence, read N- to C-terminus: Aconitate hydratase A (901 aa).

[4Fe-4S] cluster contacts are provided by Cys-443, Cys-509, and Cys-512.

This sequence belongs to the aconitase/IPM isomerase family. Monomer. It depends on [4Fe-4S] cluster as a cofactor.

It carries out the reaction citrate = D-threo-isocitrate. The enzyme catalyses (2S,3R)-3-hydroxybutane-1,2,3-tricarboxylate = 2-methyl-cis-aconitate + H2O. Its pathway is carbohydrate metabolism; tricarboxylic acid cycle; isocitrate from oxaloacetate: step 2/2. The protein operates within organic acid metabolism; propanoate degradation. In terms of biological role, involved in the catabolism of short chain fatty acids (SCFA) via the tricarboxylic acid (TCA)(acetyl degradation route) and probably the 2-methylcitrate cycle I (propionate degradation route). Catalyzes the reversible isomerization of citrate to isocitrate via cis-aconitate. Could catalyze the hydration of 2-methyl-cis-aconitate to yield (2R,3S)-2-methylisocitrate. The apo form of AcnA functions as a RNA-binding regulatory protein. The polypeptide is Aconitate hydratase A (acnA) (Staphylococcus epidermidis (strain ATCC 12228 / FDA PCI 1200)).